An 845-amino-acid chain; its full sequence is Complement component C7 (845 aa).

A signal peptide spans 1 to 22 (MQVTSLLILVCFIAAFQVFSRA). The TSP type-1 1 domain occupies 27 to 80 (NCKWDSYGPWSECNGCTKTQTRRRSVAVYGQYGGYPCEGSAFETQSCKPERGCP). 6 cysteine pairs are disulfide-bonded: Cys28–Cys63, Cys39–Cys73, Cys42–Cys79, Cys85–Cys96, Cys91–Cys109, and Cys103–Cys119. The region spanning 84–120 (GCGDRFRCFSGQCISKSLVCNGDPDCEEDGADEDKCE) is the LDL-receptor class A domain. The MACPF domain occupies 122-456 (VANPSCNIDK…EYFDEFDPCH (335 aa)). N-linked (GlcNAc...) asparagine glycosylation is present at Asn124. Cys127 and Cys164 are oxidised to a cystine. The N-linked (GlcNAc...) asparagine glycan is linked to Asn201. 21 cysteine pairs are disulfide-bonded: Cys336/Cys353, Cys433/Cys560, Cys455/Cys505, Cys457/Cys473, Cys460/Cys475, Cys477/Cys486, Cys512/Cys545, Cys523/Cys535, Cys571/Cys613, Cys599/Cys626, Cys631/Cys673, Cys659/Cys688, Cys703/Cys714, Cys716/Cys751, Cys722/Cys744, Cys729/Cys764, Cys774/Cys783, Cys777/Cys790, Cys792/Cys826, Cys798/Cys819, and Cys806/Cys839. One can recognise an EGF-like domain in the interval 457–487 (CRPCQNGGLAIVVETQCQCLCKPYTFGSACE). One can recognise a TSP type-1 2 domain in the interval 500–549 (DGGWNCWSSWSPCVQGKRTRSRECNNPPPRDDGKSCLGETTESKQCEDQD). CCP stretches follow at residues 545–615 (CEDQ…RCGE) and 616–693 (DLQW…QKAT). Sushi domains lie at 569–628 (EFCL…HCQK) and 629–690 (LACV…KCVQ). Factor I module (FIM) stretches follow at residues 695 to 771 (TPPP…SPAE) and 772 to 844 (KVCG…EEAA). Asn755 is a glycosylation site (N-linked (GlcNAc...) asparagine).

The protein belongs to the complement C6/C7/C8/C9 family. Monomer or dimer; as a C5b-7 complex it can also form multimeric rosettes. Component of the membrane attack complex (MAC), composed of complement C5b, C6, C7, C8A, C8B, C8G and multiple copies of the pore-forming subunit C9. Post-translationally, C-, N- and O-glycosylated. O-glycosylated with core 1 or possibly core 8 glycans.

The protein localises to the secreted. The protein resides in the target cell membrane. Membrane attack complex (MAC) assembly is inhibited by CD59, thereby protecting self-cells from damage during complement activation. MAC assembly is also inhibited by clusterin (CLU) chaperones that inhibit polymerization of C9. Functionally, component of the membrane attack complex (MAC), a multiprotein complex activated by the complement cascade, which inserts into a target cell membrane and forms a pore, leading to target cell membrane rupture and cell lysis. The MAC is initiated by proteolytic cleavage of C5 into complement C5b in response to the classical, alternative, lectin and GZMK complement pathways. The complement pathways consist in a cascade of proteins that leads to phagocytosis and breakdown of pathogens and signaling that strengthens the adaptive immune system. C7 serves as a membrane anchor. During MAC assembly, associates with C5b and C6 to form the C5b-7 complex, a key lipophilic precursor of the MAC complex, which associates with the outer leaflet and reduces the energy for membrane bending. This chain is Complement component C7, found in Mus musculus (Mouse).